Reading from the N-terminus, the 338-residue chain is DNA-directed RNA polymerase subunit alpha (338 aa).

The segment at methionine 1 to asparagine 225 is alpha N-terminal domain (alpha-NTD). Residues tyrosine 242 to glutamate 338 are alpha C-terminal domain (alpha-CTD). Positions phenylalanine 314–glutamate 338 are disordered.

This sequence belongs to the RNA polymerase alpha chain family. In terms of assembly, homodimer. The RNAP catalytic core consists of 2 alpha, 1 beta, 1 beta' and 1 omega subunit. When a sigma factor is associated with the core the holoenzyme is formed, which can initiate transcription.

The enzyme catalyses RNA(n) + a ribonucleoside 5'-triphosphate = RNA(n+1) + diphosphate. DNA-dependent RNA polymerase catalyzes the transcription of DNA into RNA using the four ribonucleoside triphosphates as substrates. In Corynebacterium diphtheriae (strain ATCC 700971 / NCTC 13129 / Biotype gravis), this protein is DNA-directed RNA polymerase subunit alpha.